Consider the following 475-residue polypeptide: Ribulose bisphosphate carboxylase large chain (475 aa).

Positions 1-2 (MS) are excised as a propeptide. An N-acetylproline modification is found at P3. K14 is modified (N6,N6,N6-trimethyllysine). Residues N123 and T173 each coordinate substrate. Catalysis depends on K175, which acts as the Proton acceptor. K177 lines the substrate pocket. Residues K201, D203, and E204 each coordinate Mg(2+). At K201 the chain carries N6-carboxylysine. Residue H294 is the Proton acceptor of the active site. 3 residues coordinate substrate: R295, H327, and S379.

The protein belongs to the RuBisCO large chain family. Type I subfamily. In terms of assembly, heterohexadecamer of 8 large chains and 8 small chains; disulfide-linked. The disulfide link is formed within the large subunit homodimers. It depends on Mg(2+) as a cofactor. Post-translationally, the disulfide bond which can form in the large chain dimeric partners within the hexadecamer appears to be associated with oxidative stress and protein turnover.

It localises to the plastid. The protein resides in the chloroplast. It catalyses the reaction 2 (2R)-3-phosphoglycerate + 2 H(+) = D-ribulose 1,5-bisphosphate + CO2 + H2O. The enzyme catalyses D-ribulose 1,5-bisphosphate + O2 = 2-phosphoglycolate + (2R)-3-phosphoglycerate + 2 H(+). RuBisCO catalyzes two reactions: the carboxylation of D-ribulose 1,5-bisphosphate, the primary event in carbon dioxide fixation, as well as the oxidative fragmentation of the pentose substrate in the photorespiration process. Both reactions occur simultaneously and in competition at the same active site. The chain is Ribulose bisphosphate carboxylase large chain from Cycas taitungensis (Prince sago).